We begin with the raw amino-acid sequence, 151 residues long: UPF0178 protein Spea_2958 (151 aa).

The protein belongs to the UPF0178 family.

This is UPF0178 protein Spea_2958 from Shewanella pealeana (strain ATCC 700345 / ANG-SQ1).